The primary structure comprises 271 residues: Putative phosphoenolpyruvate synthase regulatory protein (271 aa).

151–158 (GVSRSGKT) contacts ADP.

This sequence belongs to the pyruvate, phosphate/water dikinase regulatory protein family. PSRP subfamily.

It catalyses the reaction [pyruvate, water dikinase] + ADP = [pyruvate, water dikinase]-phosphate + AMP + H(+). The catalysed reaction is [pyruvate, water dikinase]-phosphate + phosphate + H(+) = [pyruvate, water dikinase] + diphosphate. Functionally, bifunctional serine/threonine kinase and phosphorylase involved in the regulation of the phosphoenolpyruvate synthase (PEPS) by catalyzing its phosphorylation/dephosphorylation. The sequence is that of Putative phosphoenolpyruvate synthase regulatory protein from Burkholderia lata (strain ATCC 17760 / DSM 23089 / LMG 22485 / NCIMB 9086 / R18194 / 383).